Consider the following 403-residue polypeptide: S-adenosylmethionine synthase (403 aa).

His-16 contacts ATP. Asp-18 provides a ligand contact to Mg(2+). Glu-44 contacts K(+). Positions 57 and 110 each coordinate L-methionine. Residues 110-120 (QSAHIAQGVDA) are flexible loop. Residues 175 to 177 (DSK), Asp-253, 259 to 260 (RK), Ala-276, and Lys-280 contribute to the ATP site. Asp-253 contacts L-methionine. Lys-284 is an L-methionine binding site.

Belongs to the AdoMet synthase family. In terms of assembly, homotetramer; dimer of dimers. It depends on Mg(2+) as a cofactor. K(+) is required as a cofactor.

The protein resides in the cytoplasm. It catalyses the reaction L-methionine + ATP + H2O = S-adenosyl-L-methionine + phosphate + diphosphate. It participates in amino-acid biosynthesis; S-adenosyl-L-methionine biosynthesis; S-adenosyl-L-methionine from L-methionine: step 1/1. Its function is as follows. Catalyzes the formation of S-adenosylmethionine (AdoMet) from methionine and ATP. The overall synthetic reaction is composed of two sequential steps, AdoMet formation and the subsequent tripolyphosphate hydrolysis which occurs prior to release of AdoMet from the enzyme. The polypeptide is S-adenosylmethionine synthase (Erythrobacter litoralis (strain HTCC2594)).